Here is a 280-residue protein sequence, read N- to C-terminus: MIREKKSFHLHMLSDATGETLISVGRAVASQYATSQVTEHIYPMIRNETQLRRALDEIQQELGIVLYTIIDKKIKLLLKKRCEKMEVPCIDILHPVLDAFQSYLGTPTNLRVSAQHDLNADYFRRIEALDFTIEHDDGKSPKGLSDADVILVGISRTSKTPTSIYLANRGIKTANVPLIPGIGFPEALLEAKNTLIVGLIASAERISHIRQNRDLGHGFAVESYTDRISIAEELIYAKRICERFGWPVIDVTRRSIEETAAAIFELLSWFREGKWKKNPS.

G153–T160 contributes to the ADP binding site.

It belongs to the pyruvate, phosphate/water dikinase regulatory protein family. PDRP subfamily.

It carries out the reaction N(tele)-phospho-L-histidyl/L-threonyl-[pyruvate, phosphate dikinase] + ADP = N(tele)-phospho-L-histidyl/O-phospho-L-threonyl-[pyruvate, phosphate dikinase] + AMP + H(+). It catalyses the reaction N(tele)-phospho-L-histidyl/O-phospho-L-threonyl-[pyruvate, phosphate dikinase] + phosphate + H(+) = N(tele)-phospho-L-histidyl/L-threonyl-[pyruvate, phosphate dikinase] + diphosphate. In terms of biological role, bifunctional serine/threonine kinase and phosphorylase involved in the regulation of the pyruvate, phosphate dikinase (PPDK) by catalyzing its phosphorylation/dephosphorylation. The sequence is that of Putative pyruvate, phosphate dikinase regulatory protein from Bartonella quintana (strain Toulouse) (Rochalimaea quintana).